Reading from the N-terminus, the 510-residue chain is Protein PLASTID TRANSCRIPTIONALLY ACTIVE 16, chloroplastic (510 aa).

Residues 1–14 show a composition bias toward polar residues; sequence MASSSTSFPLTTAP. Residues 1-19 constitute a chloroplast transit peptide; that stretch reads MASSSTSFPLTTAPPQGVR. 2 disordered regions span residues 1 to 24 and 38 to 58; these read MASS…NRRK and LGKT…NPFQ. Basic and acidic residues predominate over residues 41 to 51; the sequence is TKGDDDSEGKQ. 94–123 is an NADP(+) binding site; sequence IFVAGATGQAGIRIAQTLLQRGFSVRAGVP. A coiled-coil region spans residues 354–403; it reads ARERAEEEAKVAADKAREAAEAAKEFEKQMQKLSEKEAEAASLAEDAQQK. A Phosphoserine modification is found at serine 395. Threonine 451 carries the post-translational modification Phosphothreonine; by STN7. The tract at residues 453–493 is disordered; sequence RGQAKARNLPPKKAVVKQRPSSPFASKPKEERPKKPEKEVR. Over residues 479–493 the composition is skewed to basic and acidic residues; that stretch reads KPKEERPKKPEKEVR.

The protein belongs to the NAD(P)-dependent epimerase/dehydratase family. As to quaternary structure, component of the plastid transcriptionally active chromosome required for plastid gene expression. Interacts with DEGP1 under high light conditions and maybe its degradation target. Excluded from chloroplast nucleoid when phosphorylated on Thr-451 by STN7 that may regulate membrane-anchoring functions of the nucleoid.

The protein resides in the plastid. It localises to the chloroplast stroma. The protein localises to the chloroplast nucleoid. It is found in the chloroplast thylakoid membrane. Its function is as follows. Probably involved in the regulation of plastid gene expression. The polypeptide is Protein PLASTID TRANSCRIPTIONALLY ACTIVE 16, chloroplastic (Arabidopsis thaliana (Mouse-ear cress)).